A 630-amino-acid chain; its full sequence is Sodium-dependent serotonin transporter (630 aa).

Composition is skewed to polar residues over residues 1–11 and 42–55; these read METTPLNSQKV and QISNGYSAVPSTSA. The disordered stretch occupies residues 1–63; sequence METTPLNSQK…SAGDEAPHST (63 aa). Residues 1–87 are Cytoplasmic-facing; it reads METTPLNSQK…ERETWGKKMD (87 aa). The residue at position 47 (tyrosine 47) is a Phosphotyrosine. The chain crosses the membrane as a helical span at residues 88–112; that stretch reads FLLSVIGYAVDLGNIWRFPYICYQN. Glycine 94, alanine 96, valine 97, aspartate 98, and asparagine 101 together coordinate Na(+). Aspartate 98 is a binding site for serotonin. Residues 113 to 115 are Extracellular-facing; the sequence is GGG. Residues 116–135 form a helical membrane-spanning segment; that stretch reads AFLLPYTIMAIFGGIPLFYM. Residues 136–160 are Cytoplasmic-facing; it reads ELALGQYHRNGCISIWKKICPIFKG. Position 142 is a phosphotyrosine (tyrosine 142). A helical membrane pass occupies residues 161 to 186; the sequence is IGYAICIIAFYIASYYNTIIAWALYY. The Extracellular segment spans residues 187 to 252; the sequence is LISSFTDQLP…KGLQDLGTIS (66 aa). The cysteines at positions 200 and 209 are disulfide-linked. N-linked (GlcNAc...) asparagine glycosylation is found at asparagine 208 and asparagine 217. A helical membrane pass occupies residues 253–271; the sequence is WQLALCIMLIFTIIYFSIW. The Cytoplasmic segment spans residues 272-277; that stretch reads KGVKTS. Position 276 is a phosphothreonine (threonine 276). Residues 278-297 traverse the membrane as a helical segment; it reads GKVVWVTATFPYIVLSVLLV. Residues 298 to 324 are Extracellular-facing; the sequence is RGATLPGAWRGVVFYLKPNWQKLLETG. A helical membrane pass occupies residues 325–347; that stretch reads VWVDAAAQIFFSLGPGFGVLLAF. Serine 336 is a Na(+) binding site. Residues 348–360 lie on the Cytoplasmic side of the membrane; the sequence is ASYNKFNNNCYQD. The chain crosses the membrane as a helical span at residues 361-380; that stretch reads ALVTSVVNCMTSFVSGFVIF. Asparagine 368 serves as a coordination point for Na(+). The Extracellular segment spans residues 381–421; it reads TVLGYMAEMRNEDVSEVAKDAGPSLLFITYAEAIANMPAST. A helical membrane pass occupies residues 422-443; it reads FFAIIFFLMLITLGLDSTFAGL. Na(+)-binding residues include leucine 434, aspartate 437, and serine 438. Threonine 439 is a serotonin binding site. Residues 444–463 are Cytoplasmic-facing; the sequence is EGVITAVLDEFPHIWAKRRE. Residues 464-483 form a helical membrane-spanning segment; it reads WFVLIVVITCILGSLLTLTS. At 484–494 the chain is on the extracellular side; that stretch reads GGAYVVTLLEE. 2 residues coordinate serotonin: glutamate 494 and tyrosine 495. A helical transmembrane segment spans residues 495–516; it reads YATGPAVLTVALIEAVVVSWFY. The Cytoplasmic portion of the chain corresponds to 517–538; that stretch reads GITQFCSDVKEMLGFSPGWFWR. A helical membrane pass occupies residues 539-558; that stretch reads ICWVAISPLFLLFIICSFLM. Residues phenylalanine 556 and serine 559 each coordinate serotonin. The Extracellular portion of the chain corresponds to 559-574; sequence SPPQLRLFQYNYPHWS. Residues 575 to 595 form a helical membrane-spanning segment; that stretch reads IILGYCIGTSSVICIPIYIIY. The Cytoplasmic portion of the chain corresponds to 596-630; it reads RLISTPGTLKERIIKSITPETPTEIPCGDIRMNAV. The tract at residues 616–624 is interaction with RAB4A; that stretch reads TPTEIPCGD.

Belongs to the sodium:neurotransmitter symporter (SNF) (TC 2.A.22) family. SLC6A4 subfamily. Monomer or homooligomer. Interacts (via C-terminus) with SCAMP2; the interaction is direct and retains transporter molecules intracellularly. Interacts with filamentous actin and STX1A. Interacts (via the N-terminus) with STX1A (via the H3 domain); this interaction regulates SLC4A6 channel conductance. Interacts with SEC23A, SEC24C and PATJ. Interacts with NOS1; the interaction may diminish the cell surface localization of SERT in the brain and, correspondingly, reduce serotonin reuptake. Interacts with TGFB1I1. Interacts with ITGAV:ITGB3. Interacts (via C-terminus) with ITGB3; this interaction regulates SLC6A4 trafficking. Post-translationally, phosphorylation at Thr-276 increases 5-HT uptake and is required for cGMP-mediated SERT regulation. In terms of tissue distribution, expressed in the lung, midbrain and brainstem regions. Expressed in brainstem raphe neurons.

It localises to the cell membrane. Its subcellular location is the endomembrane system. The protein resides in the endosome membrane. The protein localises to the synapse. It is found in the cell junction. It localises to the focal adhesion. Its subcellular location is the cell projection. The protein resides in the neuron projection. It catalyses the reaction serotonin(out) + K(+)(in) + Na(+)(out) + H(+)(in) = serotonin(in) + K(+)(out) + Na(+)(in) + H(+)(out). Its function is as follows. Serotonin transporter that cotransports serotonin with one Na(+) ion in exchange for one K(+) ion and possibly one proton in an overall electroneutral transport cycle. Transports serotonin across the plasma membrane from the extracellular compartment to the cytosol thus limiting serotonin intercellular signaling. Essential for serotonin homeostasis in the central nervous system. In the developing somatosensory cortex, acts in glutamatergic neurons to control serotonin uptake and its trophic functions accounting for proper spatial organization of cortical neurons and elaboration of sensory circuits. In the mature cortex, acts primarily in brainstem raphe neurons to mediate serotonin uptake from the synaptic cleft back into the pre-synaptic terminal thus terminating serotonin signaling at the synapse. Modulates mucosal serotonin levels in the gastrointestinal tract through uptake and clearance of serotonin in enterocytes. Required for enteric neurogenesis and gastrointestinal reflexes. Regulates blood serotonin levels by ensuring rapid high affinity uptake of serotonin from plasma to platelets, where it is further stored in dense granules via vesicular monoamine transporters and then released upon stimulation. Mechanistically, the transport cycle starts with an outward-open conformation having Na1(+) and Cl(-) sites occupied. The binding of a second extracellular Na2(+) ion and serotonin substrate leads to structural changes to outward-occluded to inward-occluded to inward-open, where the Na2(+) ion and serotonin are released into the cytosol. Binding of intracellular K(+) ion induces conformational transitions to inward-occluded to outward-open and completes the cycle by releasing K(+) possibly together with a proton bound to Asp-98 into the extracellular compartment. Na1(+) and Cl(-) ions remain bound throughout the transport cycle. Additionally, displays serotonin-induced channel-like conductance for monovalent cations, mainly Na(+) ions. The channel activity is uncoupled from the transport cycle and may contribute to the membrane resting potential or excitability. This Mus musculus (Mouse) protein is Sodium-dependent serotonin transporter.